The following is a 504-amino-acid chain: ATP synthase subunit alpha (504 aa).

169 to 176 (GDRQTGKT) lines the ATP pocket.

Belongs to the ATPase alpha/beta chains family. F-type ATPases have 2 components, CF(1) - the catalytic core - and CF(0) - the membrane proton channel. CF(1) has five subunits: alpha(3), beta(3), gamma(1), delta(1), epsilon(1). CF(0) has three main subunits: a(1), b(2) and c(9-12). The alpha and beta chains form an alternating ring which encloses part of the gamma chain. CF(1) is attached to CF(0) by a central stalk formed by the gamma and epsilon chains, while a peripheral stalk is formed by the delta and b chains.

The protein resides in the cell membrane. It catalyses the reaction ATP + H2O + 4 H(+)(in) = ADP + phosphate + 5 H(+)(out). In terms of biological role, produces ATP from ADP in the presence of a proton gradient across the membrane. The alpha chain is a regulatory subunit. The chain is ATP synthase subunit alpha from Clostridium botulinum (strain Alaska E43 / Type E3).